The sequence spans 399 residues: MKPKQKISVEPLLLVAILIGVLVAATHAQDQKSVKPSAAAPSAAASRPHDEIYIDDDSIEGSGGRGGIHEDLEKDPDYSGSGFGPDDEDAEPDQHSHSSHNTRISQSSNSGINTAHTPTQTSSTIPTTSTSTPMPTTTPTATTPASTTTAAATQISSFANSSSTTTTTLAPTIPAEPQQPLFPPFDKDLDTESSGDGIDADAEDDDEDDGDDKDYDYNKELDKEIDIDGPEPGHLPPVVHHNTVETGHIPTTDEIDVDGGDEDDNGDSDIDGPRIGGNDGDITERGPGAGGSNVHELDPNTNVNSQPSDTKGIDHRPNGNEVVIMSEDDRTSSFFSQPGILAAVIGGAVVGLLCAILVVMFIVYRMRKKDEGSYALDEPKRSPANNSYAKNANNREFYA.

Residues 1–28 (MKPKQKISVEPLLLVAILIGVLVAATHA) form the signal peptide. Residues 28-319 (AQDQKSVKPS…TKGIDHRPNG (292 aa)) form a disordered region. Topologically, residues 29–340 (QDQKSVKPSA…TSSFFSQPGI (312 aa)) are extracellular. Residues 36-46 (PSAAAPSAAAS) show a composition bias toward low complexity. A glycan (O-linked (Xyl...) (glycosaminoglycan) serine) is linked at S62. A compositionally biased stretch (basic and acidic residues) spans 67–77 (GIHEDLEKDPD). 3 O-linked (Xyl...) (glycosaminoglycan) serine glycosylation sites follow: S79, S81, and S110. The segment covering 99-116 (SHNTRISQSSNSGINTAH) has biased composition (polar residues). Low complexity predominate over residues 117–172 (TPTQTSSTIPTTSTSTPMPTTTPTATTPASTTTAAATQISSFANSSSTTTTTLAPT). N-linked (GlcNAc...) asparagine glycosylation is present at N160. A compositionally biased stretch (acidic residues) spans 191–214 (TESSGDGIDADAEDDDEDDGDDKD). Residue S194 is glycosylated (O-linked (Xyl...) (glycosaminoglycan) serine). Basic and acidic residues predominate over residues 215-226 (YDYNKELDKEID). The segment covering 253–270 (DEIDVDGGDEDDNGDSDI) has biased composition (acidic residues). Residues 299 to 309 (PNTNVNSQPSD) show a composition bias toward polar residues. The chain crosses the membrane as a helical span at residues 341 to 365 (LAAVIGGAVVGLLCAILVVMFIVYR). At 366–399 (MRKKDEGSYALDEPKRSPANNSYAKNANNREFYA) the chain is on the cytoplasmic side. The disordered stretch occupies residues 373–399 (SYALDEPKRSPANNSYAKNANNREFYA). Polar residues predominate over residues 383-399 (PANNSYAKNANNREFYA).

The protein belongs to the syndecan proteoglycan family. In terms of tissue distribution, in 13-16 hours embryos, expressed in lymph glands, peripheral and central nervous system and basal surfaces of gut epithelia. Sdc and robo are coexpressed in domains adjacent to slit; in tracheal pits and midline glia cells.

It is found in the membrane. In terms of biological role, cell surface proteoglycan that bears heparan sulfate. Required for axonal and myotube guidance, is a necessary component of slit/robo signaling and is required in the slit target cells. The chain is Syndecan (Sdc) from Drosophila melanogaster (Fruit fly).